Reading from the N-terminus, the 247-residue chain is tRNA (guanine-N(1)-)-methyltransferase (247 aa).

S-adenosyl-L-methionine is bound by residues Gly-112 and Leu-131–Leu-136.

The protein belongs to the RNA methyltransferase TrmD family. In terms of assembly, homodimer.

It is found in the cytoplasm. It catalyses the reaction guanosine(37) in tRNA + S-adenosyl-L-methionine = N(1)-methylguanosine(37) in tRNA + S-adenosyl-L-homocysteine + H(+). In terms of biological role, specifically methylates guanosine-37 in various tRNAs. This chain is tRNA (guanine-N(1)-)-methyltransferase, found in Syntrophotalea carbinolica (strain DSM 2380 / NBRC 103641 / GraBd1) (Pelobacter carbinolicus).